We begin with the raw amino-acid sequence, 737 residues long: Alpha-adducin (737 aa).

Methionine 1 bears the N-acetylmethionine mark. Residues 1 to 21 (MNGDSRAAVVTSPPPTTAPHK) form a disordered region. Serine 12 is subject to Phosphoserine. Serine 59 bears the Phosphoserine; by PKA mark. Serine 64 bears the Phosphoserine mark. Threonine 331 is modified (phosphothreonine). 5 positions are modified to phosphoserine: serine 334, serine 353, serine 355, serine 358, and serine 366. Serine 408 carries the post-translational modification Phosphoserine; by PKA. Residues 419–430 (YSFTSDGDSGTC) show a composition bias toward polar residues. Disordered regions lie at residues 419–490 (YSFT…NLFV) and 576–737 (RREV…KSES). Position 427 is a phosphoserine (serine 427). Residue threonine 429 is modified to Phosphothreonine. A Phosphoserine modification is found at serine 431. Residue serine 436 is modified to Phosphoserine; by PKA. Threonine 445 bears the Phosphothreonine; by ROCK2 mark. Residues serine 464 and serine 465 each carry the phosphoserine modification. Phosphothreonine; by ROCK2 is present on threonine 480. Residue serine 481 is modified to Phosphoserine; by PKA. Over residues 576-601 (RREVERKQKGSEENLDEAREQKEKSP) the composition is skewed to basic and acidic residues. Phosphoserine is present on residues serine 586, serine 600, and serine 613. Pro residues predominate over residues 602 to 614 (PDQPAVPYPPPST). Phosphothreonine is present on threonine 614. Phosphoserine is present on residues serine 678, serine 707, serine 710, and serine 714. Low complexity predominate over residues 687-714 (PVAEEAAPSAAEEGAAADPGSDGSPGKS). Basic residues predominate over residues 715 to 737 (PSKKKKKFRTPSFLKKSKKKSES). The residue at position 716 (serine 716) is a Phosphoserine; by PKC. The interval 717–734 (KKKKKFRTPSFLKKSKKK) is interaction with calmodulin. Serine 726 carries the phosphoserine; by PKA and PKC modification.

This sequence belongs to the aldolase class II family. Adducin subfamily. In terms of assembly, heterodimer of an alpha and a beta subunit or an alpha and a gamma subunit.

It is found in the cytoplasm. The protein localises to the cytoskeleton. The protein resides in the cell membrane. In terms of biological role, membrane-cytoskeleton-associated protein that promotes the assembly of the spectrin-actin network. Binds to calmodulin. The protein is Alpha-adducin (ADD1) of Pongo abelii (Sumatran orangutan).